Reading from the N-terminus, the 80-residue chain is Exodeoxyribonuclease 7 small subunit (80 aa).

This sequence belongs to the XseB family. Heterooligomer composed of large and small subunits.

Its subcellular location is the cytoplasm. It carries out the reaction Exonucleolytic cleavage in either 5'- to 3'- or 3'- to 5'-direction to yield nucleoside 5'-phosphates.. Bidirectionally degrades single-stranded DNA into large acid-insoluble oligonucleotides, which are then degraded further into small acid-soluble oligonucleotides. In Rickettsia conorii (strain ATCC VR-613 / Malish 7), this protein is Exodeoxyribonuclease 7 small subunit.